Reading from the N-terminus, the 356-residue chain is S-adenosylmethionine:tRNA ribosyltransferase-isomerase (356 aa).

The protein belongs to the QueA family. Monomer.

It is found in the cytoplasm. The enzyme catalyses 7-aminomethyl-7-carbaguanosine(34) in tRNA + S-adenosyl-L-methionine = epoxyqueuosine(34) in tRNA + adenine + L-methionine + 2 H(+). It functions in the pathway tRNA modification; tRNA-queuosine biosynthesis. Transfers and isomerizes the ribose moiety from AdoMet to the 7-aminomethyl group of 7-deazaguanine (preQ1-tRNA) to give epoxyqueuosine (oQ-tRNA). The polypeptide is S-adenosylmethionine:tRNA ribosyltransferase-isomerase (Yersinia pseudotuberculosis serotype O:3 (strain YPIII)).